We begin with the raw amino-acid sequence, 713 residues long: Fibroblast growth factor receptor 4 (713 aa).

The N-terminal stretch at 1–20 is a signal peptide; the sequence is MLPLWLVLAGLLLAVGPAAS. The tract at residues 21-54 is disordered; that stretch reads HRGEMEPDSLASGDDDEDSDGDGPHGDRSEEPVY. Over 21–281 the chain is Extracellular; sequence HRGEMEPDSL…AETSEAKYTD (261 aa). Positions 42-54 are enriched in basic and acidic residues; sequence DGPHGDRSEEPVY. Ig-like C2-type domains are found at residues 59–152 and 161–261; these read PYWT…YLLD and PILQ…AWLT. Cysteines 84 and 136 form a disulfide. Residues asparagine 133, asparagine 170, asparagine 202, asparagine 223, and asparagine 234 are each glycosylated (N-linked (GlcNAc...) asparagine). Cysteines 183 and 245 form a disulfide. A helical transmembrane segment spans residues 282–302; the sequence is IIIYTSGSLAVAMALIIVVLC. The Cytoplasmic portion of the chain corresponds to 303–713; it reads RMQTQSSKQP…CLFSCPSGRT (411 aa). One can recognise a Protein kinase domain in the interval 379–667; sequence LVLGKPLGEG…ILAAISEEYL (289 aa). ATP is bound by residues 385–393 and lysine 415; that span reads LGEGCFGQV. The active-site Proton acceptor is the aspartate 524. Residues tyrosine 554, tyrosine 555, and tyrosine 666 each carry the phosphotyrosine; by autocatalysis modification.

The protein belongs to the protein kinase superfamily. Tyr protein kinase family. Fibroblast growth factor receptor subfamily. Monomer. Homodimer after ligand binding. Interacts with FGF1, FGF2, FGF4, FGF6, FGF8, FGF9, FGF16, FGF17, FGF18, FGF19, FGF21 and FGF23 (in vitro). Binding affinity for FGF family members is enhanced by interactions between FGFs and heparan sulfate proteoglycans. Interacts with KLB; this strongly increases the affinity for FGF19 and FGF23. Affinity for FGF19 is strongly increased by KLB and sulfated glycosaminoglycans. KLB and KL both interact with the core-glycosylated FGFR4 in the endoplasmic reticulum and promote its degradation, so that only FGFR4 with fully mature N-glycans is expressed at the cell surface. Identified in a complex with NCAM1, CDH2, PLCG1, FRS2, SRC, SHC1, GAP43 and CTTN. Interacts with MMP14 and HIP1. Interacts with STAT3. Post-translationally, N-glycosylated. Full maturation of the glycan chains in the Golgi is essential for high affinity interaction with FGF19. In terms of processing, ubiquitinated. Subject to proteasomal degradation when not fully glycosylated. Autophosphorylated. Binding of FGF family members together with heparan sulfate proteoglycan or heparin promotes receptor dimerization and autophosphorylation on tyrosine residues. Autophosphorylation occurs in trans between the two FGFR molecules present in the dimer.

The protein resides in the cell membrane. The protein localises to the endosome. Its subcellular location is the endoplasmic reticulum. The enzyme catalyses L-tyrosyl-[protein] + ATP = O-phospho-L-tyrosyl-[protein] + ADP + H(+). Present in an inactive conformation in the absence of bound ligand. Ligand binding leads to dimerization and activation by autophosphorylation on tyrosine residues. Tyrosine-protein kinase that acts as a cell-surface receptor for fibroblast growth factors and plays a role in the regulation of cell proliferation, differentiation and migration, and in regulation of lipid metabolism, bile acid biosynthesis, glucose uptake, vitamin D metabolism and phosphate homeostasis. Required for normal down-regulation of the expression of CYP7A1, the rate-limiting enzyme in bile acid synthesis, in response to FGF19. Phosphorylates PLCG1 and FRS2. Ligand binding leads to the activation of several signaling cascades. Activation of PLCG1 leads to the production of the cellular signaling molecules diacylglycerol and inositol 1,4,5-trisphosphate. Phosphorylation of FRS2 triggers recruitment of GRB2, GAB1, PIK3R1 and SOS1, and mediates activation of RAS, MAPK1/ERK2, MAPK3/ERK1 and the MAP kinase signaling pathway, as well as of the AKT1 signaling pathway. Promotes SRC-dependent phosphorylation of the matrix protease MMP14 and its lysosomal degradation. FGFR4 signaling is down-regulated by receptor internalization and degradation; MMP14 promotes internalization and degradation of FGFR4. This chain is Fibroblast growth factor receptor 4 (FGFR4), found in Coturnix coturnix (Common quail).